We begin with the raw amino-acid sequence, 209 residues long: Ribosomal RNA large subunit methyltransferase E (209 aa).

Positions 63, 65, 83, 99, and 124 each coordinate S-adenosyl-L-methionine. The active-site Proton acceptor is the Lys-164.

It belongs to the class I-like SAM-binding methyltransferase superfamily. RNA methyltransferase RlmE family.

Its subcellular location is the cytoplasm. It catalyses the reaction uridine(2552) in 23S rRNA + S-adenosyl-L-methionine = 2'-O-methyluridine(2552) in 23S rRNA + S-adenosyl-L-homocysteine + H(+). Specifically methylates the uridine in position 2552 of 23S rRNA at the 2'-O position of the ribose in the fully assembled 50S ribosomal subunit. This is Ribosomal RNA large subunit methyltransferase E from Tolumonas auensis (strain DSM 9187 / NBRC 110442 / TA 4).